A 100-amino-acid chain; its full sequence is Urease subunit gamma (100 aa).

This sequence belongs to the urease gamma subunit family. Heterotrimer of UreA (gamma), UreB (beta) and UreC (alpha) subunits. Three heterotrimers associate to form the active enzyme.

It is found in the cytoplasm. It catalyses the reaction urea + 2 H2O + H(+) = hydrogencarbonate + 2 NH4(+). Its pathway is nitrogen metabolism; urea degradation; CO(2) and NH(3) from urea (urease route): step 1/1. This chain is Urease subunit gamma, found in Stutzerimonas stutzeri (strain A1501) (Pseudomonas stutzeri).